The primary structure comprises 226 residues: Teichuronic acid biosynthesis protein TuaF (226 aa).

2 helical membrane passes run 15 to 35 (NIIWIIAVPIILGAAGYILPS) and 202 to 222 (VLGVMIGLTIAFMFVVIPEFF).

The protein resides in the cell membrane. The protein operates within cell wall biogenesis; teichuronic acid biosynthesis. This is Teichuronic acid biosynthesis protein TuaF (tuaF) from Bacillus subtilis (strain 168).